The primary structure comprises 466 residues: Cysteine--tRNA ligase (466 aa).

Cysteine 28 provides a ligand contact to Zn(2+). The 'HIGH' region motif lies at 30–40 (PTVYNFFHIGN). Residues cysteine 208, histidine 233, and glutamate 237 each coordinate Zn(2+). Residues 265–269 (KMSKS) carry the 'KMSKS' region motif. Lysine 268 serves as a coordination point for ATP.

The protein belongs to the class-I aminoacyl-tRNA synthetase family. Monomer. Requires Zn(2+) as cofactor.

The protein resides in the cytoplasm. It carries out the reaction tRNA(Cys) + L-cysteine + ATP = L-cysteinyl-tRNA(Cys) + AMP + diphosphate. This is Cysteine--tRNA ligase from Clostridium perfringens (strain SM101 / Type A).